A 397-amino-acid chain; its full sequence is GTPase Obg (397 aa).

Residues 1 to 159 (MKFVDEAEIR…RMLKLELMLL (159 aa)) enclose the Obg domain. Residues 22 to 44 (SFRREKYVPDGGPDGGDGGDGGS) are disordered. Positions 33–43 (GPDGGDGGDGG) are enriched in gly residues. The OBG-type G domain maps to 160–333 (ADVGLLGMPN…LCIKVMDFIE (174 aa)). Residues 166–173 (GMPNAGKS), 191–195 (FTTLV), 213–216 (DIPG), 283–286 (NKVD), and 314–316 (SAV) each bind GTP. Residues serine 173 and threonine 193 each contribute to the Mg(2+) site. A disordered region spans residues 359-389 (TVENYEDDDDFDDDDDDDFDGDDDDDFDGDD). Acidic residues predominate over residues 361 to 389 (ENYEDDDDFDDDDDDDFDGDDDDDFDGDD).

It belongs to the TRAFAC class OBG-HflX-like GTPase superfamily. OBG GTPase family. As to quaternary structure, monomer. Mg(2+) serves as cofactor.

It localises to the cytoplasm. Functionally, an essential GTPase which binds GTP, GDP and possibly (p)ppGpp with moderate affinity, with high nucleotide exchange rates and a fairly low GTP hydrolysis rate. Plays a role in control of the cell cycle, stress response, ribosome biogenesis and in those bacteria that undergo differentiation, in morphogenesis control. The chain is GTPase Obg from Pseudoalteromonas atlantica (strain T6c / ATCC BAA-1087).